The chain runs to 427 residues: 5-hydroxybenzimidazole synthase BzaA (427 aa).

This sequence belongs to the ThiC family. 5-hydroxybenzimidazole synthase subfamily. [4Fe-4S] cluster is required as a cofactor.

It catalyses the reaction 5-amino-1-(5-phospho-beta-D-ribosyl)imidazole + AH2 + S-adenosyl-L-methionine = 5-hydroxybenzimidazole + 5'-deoxyadenosine + formate + L-methionine + A + NH4(+) + phosphate + 2 H(+). Its pathway is cofactor biosynthesis; adenosylcobalamin biosynthesis. Its function is as follows. Together with BzaB, catalyzes the conversion of aminoimidazole ribotide (AIR) to 5-hydroxybenzimidazole (5-HBI) in a radical S-adenosyl-L-methionine (SAM)-dependent reaction. Is thus involved in the anaerobic biosynthesis of dimethylbenzimidazole (DMB), the lower axial ligand of vitamin B12 (cobalamin). Requires BzaB for catalytic activity, as BzaA alone displays no activity. The chain is 5-hydroxybenzimidazole synthase BzaA from Eubacterium limosum.